Here is a 288-residue protein sequence, read N- to C-terminus: N(1)-aminopropylagmatine ureohydrolase (288 aa).

6 residues coordinate Mn(2+): His-114, Asp-133, His-135, Asp-137, Asp-213, and Asp-215.

It belongs to the arginase family. The cofactor is Mn(2+).

It is found in the cytoplasm. It catalyses the reaction N(1)-(3-aminopropyl)agmatine + H2O = urea + spermidine. The enzyme catalyses agmatine + H2O = urea + putrescine. The protein operates within amine and polyamine biosynthesis; spermidine biosynthesis. Functionally, involved in the biosynthesis of polyamines which are thought to support the growth of thermophilic microorganisms under high-temperature conditions. It seems that long-chain and branched-chain of polyamines effectively stabilize DNA and RNA, respectively. Catalyzes the decarboxylation of N1-(3-aminopropyl)agmatine to yield spermidine and urea. It can also use agmatine to yield putrescine. In Thermococcus kodakarensis (strain ATCC BAA-918 / JCM 12380 / KOD1) (Pyrococcus kodakaraensis (strain KOD1)), this protein is N(1)-aminopropylagmatine ureohydrolase.